Reading from the N-terminus, the 136-residue chain is Protein NrdI (136 aa).

Belongs to the NrdI family.

In terms of biological role, probably involved in ribonucleotide reductase function. This is Protein NrdI from Erwinia tasmaniensis (strain DSM 17950 / CFBP 7177 / CIP 109463 / NCPPB 4357 / Et1/99).